The primary structure comprises 336 residues: Fructose-1,6-bisphosphatase class 1 (336 aa).

Positions 90, 112, 114, and 115 each coordinate Mg(2+). Substrate-binding positions include 115–118 (DGSS), Asn-211, and Lys-277. Glu-283 contacts Mg(2+).

Belongs to the FBPase class 1 family. In terms of assembly, homotetramer. The cofactor is Mg(2+).

The protein resides in the cytoplasm. It carries out the reaction beta-D-fructose 1,6-bisphosphate + H2O = beta-D-fructose 6-phosphate + phosphate. It participates in carbohydrate biosynthesis; gluconeogenesis. The chain is Fructose-1,6-bisphosphatase class 1 from Pseudomonas putida (strain GB-1).